The sequence spans 689 residues: Translation initiation factor IF-2 (689 aa).

A disordered region spans residues 70–107; sequence VRSKKNSNKKKKKGKGNQDKRQENFAGKQQAQTVETPD. Residues 71–84 show a composition bias toward basic residues; the sequence is RSKKNSNKKKKKGK. Residues 191–360 form the tr-type G domain; sequence ERPAVVTIMG…LLVSEVEEYK (170 aa). The segment at 200–207 is G1; it reads GHVDHGKT. 200 to 207 is a binding site for GTP; sequence GHVDHGKT. The interval 225-229 is G2; that stretch reads GITQH. The segment at 246–249 is G3; sequence DTPG. GTP is bound by residues 246–250 and 300–303; these read DTPGH and NKMD. Residues 300–303 form a G4 region; that stretch reads NKMD. The tract at residues 336-338 is G5; that stretch reads SAI.

The protein belongs to the TRAFAC class translation factor GTPase superfamily. Classic translation factor GTPase family. IF-2 subfamily.

The protein localises to the cytoplasm. One of the essential components for the initiation of protein synthesis. Protects formylmethionyl-tRNA from spontaneous hydrolysis and promotes its binding to the 30S ribosomal subunits. Also involved in the hydrolysis of GTP during the formation of the 70S ribosomal complex. The sequence is that of Translation initiation factor IF-2 from Bacillus cytotoxicus (strain DSM 22905 / CIP 110041 / 391-98 / NVH 391-98).